Here is a 126-residue protein sequence, read N- to C-terminus: Small ribosomal subunit protein uS13c (126 aa).

Residues 97–126 (PLRGQRTRTNARTRRGGKKTVAGKKKAPRK) are disordered. Residues 101 to 126 (QRTRTNARTRRGGKKTVAGKKKAPRK) are compositionally biased toward basic residues.

It belongs to the universal ribosomal protein uS13 family. As to quaternary structure, part of the 30S ribosomal subunit.

Its subcellular location is the plastid. The protein localises to the chloroplast. Located at the top of the head of the 30S subunit, it contacts several helices of the 16S rRNA. The chain is Small ribosomal subunit protein uS13c from Porphyra purpurea (Red seaweed).